Here is a 201-residue protein sequence, read N- to C-terminus: MNSNIIKSIDIIPNNNNNNNNSVSTVNTNSSVINNNNNNNYNNNSISNGNNERIKVFIVHGHNNIVREKVSKFLFEMGFEPILLFEKPNNGQTIIEKLEKEISNCKFGIVIMSPDNKAFTKKDSNSDYVEIAYPRLNVVFEFGYLIGKFGRSNVIYLSVPYNGKSQNYDLPSDLLGYVWINYTEDLKELENEINFGNYKKL.

The 135-residue stretch at 52 to 186 (ERIKVFIVHG…YVWINYTEDL (135 aa)) folds into the TIR domain.

The chain is Protein tirC (tirC) from Dictyostelium discoideum (Social amoeba).